Consider the following 294-residue polypeptide: UPF0761 membrane protein YPTS_0028 (294 aa).

Helical transmembrane passes span 44–64, 67–87, 108–128, 136–156, 185–205, 212–232, and 246–266; these read LLSL…FPMF, ISIK…GDII, GLIV…NIIW, LVFS…LVGA, VFPL…VPTV, ALIG…GFAM, and VLAV…IVLL.

The protein belongs to the UPF0761 family.

Its subcellular location is the cell inner membrane. The protein is UPF0761 membrane protein YPTS_0028 of Yersinia pseudotuberculosis serotype IB (strain PB1/+).